Reading from the N-terminus, the 601-residue chain is MLRTSPAGSLRAEHTAQVVTLTGWVDRRRDHGGVAFIDLRDASGIAQVVIRDEAVAHPLRNEFVLQVTGEVSRRPAGNENPNLPTGEIEVVASDVVVLNSAAALPFQVSTALADTEAIGEEVRLKYRYLDLRRPAPARAIRLRAKANQAARRVLDAEEFVEIETPTLTRSTPEGARDFLVPARLAPGSWYALPQSPQLFKQLLMVAGMERYYQIARCYRDEDFRADRQPEFTQLDVEMSFVEQDDVIALAEKVLVALWELIGFTIPTPIPRMTFDDAMRLYGTDKPDLRFGNPIVELTSYFADTPFRVFQSEYVGAVVMAGGASLPRRQFDAWQEWAKQRGARGLAYVTFPEDGSDLGGPVAKNLSDAERAGLREATGAAPGDAVFFAAGATTPSRALLGAARQEIAKRTGLIDSADQEGAWAFVWVVDAPLFKPTGDAADDGDVALGHSAWTAVHHAFTSPTPEWIDTFEQDPGSALSNAYDIVCNGNEIGGGSIRIHRRDVQERVFQVMGIDAAEAQEKFGFLLDAFSYGAPPHGGIAFGWDRILALLTGSESIREVIAFPKSGGGYDPLTQAPAPITAEQRRESGVDAVPDDETAPQA.

Glutamate 173 serves as a coordination point for L-aspartate. Residues 197-200 form an aspartate region; the sequence is QLFK. Position 219 (arginine 219) interacts with L-aspartate. Residues 219–221 and glutamine 228 each bind ATP; that span reads RDE. Histidine 456 contributes to the L-aspartate binding site. Glutamate 490 contributes to the ATP binding site. L-aspartate is bound at residue arginine 497. 542 to 545 provides a ligand contact to ATP; sequence GWDR. Residues 566–601 form a disordered region; the sequence is GGGYDPLTQAPAPITAEQRRESGVDAVPDDETAPQA. The span at 592-601 shows a compositional bias: acidic residues; that stretch reads VPDDETAPQA.

The protein belongs to the class-II aminoacyl-tRNA synthetase family. Type 1 subfamily. Homodimer.

It localises to the cytoplasm. It catalyses the reaction tRNA(Asx) + L-aspartate + ATP = L-aspartyl-tRNA(Asx) + AMP + diphosphate. Functionally, aspartyl-tRNA synthetase with relaxed tRNA specificity since it is able to aspartylate not only its cognate tRNA(Asp) but also tRNA(Asn). Reaction proceeds in two steps: L-aspartate is first activated by ATP to form Asp-AMP and then transferred to the acceptor end of tRNA(Asp/Asn). This is Aspartate--tRNA(Asp/Asn) ligase from Beutenbergia cavernae (strain ATCC BAA-8 / DSM 12333 / CCUG 43141 / JCM 11478 / NBRC 16432 / NCIMB 13614 / HKI 0122).